The sequence spans 500 residues: Protein-cysteine N-palmitoyltransferase Rasp (500 aa).

The next 10 helical transmembrane spans lie at 15–35, 73–93, 105–125, 134–154, 206–226, 243–263, 293–313, 372–392, 429–449, and 461–481; these read IFVYFGVYIAYIVVGLYKIYG, GDFIVSFWPFYLLHVAVQGFI, FIGVCALALSVNLDWSSMVLL, IVSLLSLKFLVWLLSAGWILC, SLVQYLGYAMYFPCLTYGPII, LGFVGGVLRSAIWWLVMQCAL, FMGQFFFLYYVVTYGLGIAFA, LTFAFVFVWHGCYTYVLIWSI, LYAMLATQLFIPAAFSNVYFI, and GAYLSGVGNYVALCFCSYCFF. The active site involves His381.

This sequence belongs to the membrane-bound acyltransferase family. HHAT subfamily.

The protein resides in the membrane. It catalyses the reaction N-terminal L-cysteinyl-[protein] + hexadecanoyl-CoA = N-terminal N-hexadecanoyl-L-cysteinyl-[protein] + CoA + H(+). It carries out the reaction N-terminal L-cysteinyl-[protein]-C-terminal glycyl cholesterol ester + hexadecanoyl-CoA = N-terminal N-hexadecanoyl-L-cysteinyl-[protein]-C-terminal glycyl cholesterol ester + CoA + H(+). Its function is as follows. Required in hedgehog (hh) expressing cells for production of appropriate signaling activity in embryos and in the imaginal precursors of adult tissues. Acts within the secretory pathway to catalyze N-terminal palmitoylation of Hh; this lipid modification is required for the embryonic and larval patterning activities of the Hh signal. Not required for Wg signaling. The protein is Protein-cysteine N-palmitoyltransferase Rasp (rasp) of Drosophila melanogaster (Fruit fly).